The following is a 361-amino-acid chain: Homocitrate synthase (361 aa).

A Pyruvate carboxyltransferase domain is found at M1–Y249. Position 8 (R8) interacts with 2-oxoglutarate. Mg(2+) is bound at residue E9. The 2-oxoglutarate site is built by H68, R128, and T162. H188 and H190 together coordinate Mg(2+). H282 acts as the Proton acceptor in catalysis.

It belongs to the alpha-IPM synthase/homocitrate synthase family. Homocitrate synthase LYS20/LYS21 subfamily. Mg(2+) is required as a cofactor. The cofactor is Mn(2+).

It catalyses the reaction acetyl-CoA + 2-oxoglutarate + H2O = (2R)-homocitrate + CoA + H(+). The protein operates within amino-acid biosynthesis; L-lysine biosynthesis via AAA pathway; L-alpha-aminoadipate from 2-oxoglutarate: step 1/5. In terms of biological role, catalyzes the aldol-type condensation of 2-oxoglutarate with acetyl-CoA to yield homocitrate. Carries out the first step of the alpha-aminoadipate (AAA) lysine biosynthesis pathway. This is Homocitrate synthase from Pyrococcus horikoshii (strain ATCC 700860 / DSM 12428 / JCM 9974 / NBRC 100139 / OT-3).